The chain runs to 626 residues: MSDPVRITNPGAESLGYDSDGHEIMAVDIYVNPPRVDVFHGTPPAWSSFGNKTIWGGNEWVDDSPTRSDIEKRDKEITAYKNTLSAQQKENENKRTEAGKRLSAAIAAREKDENTLKTLRAGNADAADITRQEFRLLQAELREYGFRTEIAGYDALRLHTESRMLFADADSLRISPREARSLIEQAEKRQKDAQNADKKAADMLAEYERRKGILDTRLSELEKNGGAALAVLDAQQARLLGQQTRNDRAISEARNKLSSVTESLNTARNALTRAEQQLTQQKNTPDGKTIVSPEKFPGRSSTNHSIVVSGDPRFAGTIKITTSAVIDNRANLNYLLSHSGLDYKRNILNDRNPVVTEDVEGDKKIYNAEVAEWDKLRQRLLDARNKITSAESAVNSARNNLSARTNEQKHANDALNALLKEKENIRNQLSGINQKIAEEKRKQDELKATKDAINFTTEFLKSVSEKYGAKAEQLAREMAGQAKGKKIRNVEEALKTYEKYRADINKKINAKDRAAIAAALESVKLSDISSNLNRFSRGLGYAGKFTSLADWITEFGKAVRTENWRPLFVKTETIIAGNAATALVALVFSILTGSALGIIGYGLLMAVTGALIDESLVEKANKFWGI.

A translocation (T) region spans residues Glu-23–Gly-225. A compositionally biased stretch (polar residues) spans Gln-276–Asp-286. Residues Gln-276–Val-308 form a disordered region. Residues Lys-282–Asn-385 form a receptor-binding (R) region. Residues Lys-450–Ile-626 are channel (C). Helical transmembrane passes span Ala-580 to Ser-594 and Gly-597 to Ile-612.

Belongs to the channel forming colicin family.

The protein resides in the cell membrane. This colicin is a channel-forming colicin. This class of transmembrane toxins depolarize the cytoplasmic membrane, leading to dissipation of cellular energy. Its function is as follows. Colicins are polypeptide toxins produced by and active against E.coli and closely related bacteria. This chain is Colicin-Ia (cia), found in Escherichia coli.